Reading from the N-terminus, the 297-residue chain is tRNA pseudouridine synthase B (297 aa).

Asp44 acts as the Nucleophile in catalysis.

This sequence belongs to the pseudouridine synthase TruB family. Type 1 subfamily.

It catalyses the reaction uridine(55) in tRNA = pseudouridine(55) in tRNA. Responsible for synthesis of pseudouridine from uracil-55 in the psi GC loop of transfer RNAs. The chain is tRNA pseudouridine synthase B from Corynebacterium glutamicum (strain ATCC 13032 / DSM 20300 / JCM 1318 / BCRC 11384 / CCUG 27702 / LMG 3730 / NBRC 12168 / NCIMB 10025 / NRRL B-2784 / 534).